We begin with the raw amino-acid sequence, 36 residues long: Serum amyloid P-component (36 aa).

One can recognise a Pentraxin (PTX) domain in the interval 6 to 36 (SGKVFVIPMATSTSHVKLHARVSEPISAMTM).

It belongs to the pentraxin family. As to quaternary structure, homopentamer. Discoid arrangement of 5 covalently bound subunits. It depends on Ca(2+) as a cofactor.

The protein localises to the secreted. The sequence is that of Serum amyloid P-component from Salmo salar (Atlantic salmon).